A 243-amino-acid polypeptide reads, in one-letter code: Membrane selenoprotein (243 aa).

The segment at 12 to 63 is disordered; that stretch reads GEDCEGGVUARPSSSSSSINNASDESTPLISKTNDEEKANIGISSTSNSPQE. Sec-20 is a non-standard amino acid (selenocysteine). 2 stretches are compositionally biased toward polar residues: residues 30–43 and 53–63; these read INNASDESTPLISK and GISSTSNSPQE. The next 4 membrane-spanning stretches (helical) occupy residues 74-94, 102-122, 144-164, and 199-219; these read ILTLLISIPALVGSUCWPVLI, VSAGSVELAHSLTFAITLSIL, IKFGPFYLTAIAVPLATFDIL, and VMGWFSAIVFTYTGYACLLVG. A non-standard amino acid (selenocysteine) is located at residue Sec-88.

The protein localises to the membrane. This chain is Membrane selenoprotein (msp), found in Dictyostelium discoideum (Social amoeba).